The primary structure comprises 404 residues: Serpin-Z2B (404 aa).

The tract at residues 349 to 373 is RCL; that stretch reads GTEAAAATACTMKFLCLTLTSPVDF.

It belongs to the serpin family.

Probable serine protease inhibitor. In Oryza sativa subsp. japonica (Rice), this protein is Serpin-Z2B.